Here is a 503-residue protein sequence, read N- to C-terminus: Lysine--tRNA ligase (503 aa).

Mg(2+)-binding residues include Glu-414 and Glu-421.

It belongs to the class-II aminoacyl-tRNA synthetase family. Homodimer. Mg(2+) is required as a cofactor.

The protein localises to the cytoplasm. It catalyses the reaction tRNA(Lys) + L-lysine + ATP = L-lysyl-tRNA(Lys) + AMP + diphosphate. This chain is Lysine--tRNA ligase, found in Neisseria meningitidis serogroup A / serotype 4A (strain DSM 15465 / Z2491).